An 876-amino-acid chain; its full sequence is Leucine--tRNA ligase (876 aa).

Positions 42–52 (PYPSGKLHMGH) match the 'HIGH' region motif. Residues 634-638 (KMSKS) carry the 'KMSKS' region motif. Lys-637 serves as a coordination point for ATP.

The protein belongs to the class-I aminoacyl-tRNA synthetase family.

The protein localises to the cytoplasm. The enzyme catalyses tRNA(Leu) + L-leucine + ATP = L-leucyl-tRNA(Leu) + AMP + diphosphate. The protein is Leucine--tRNA ligase of Neisseria gonorrhoeae (strain ATCC 700825 / FA 1090).